The following is a 148-amino-acid chain: Ribonuclease 4 (148 aa).

The N-terminal stretch at 1-29 (MMDLQRTQSLLLLLVLTLLGLGLVQPSYG) is a signal peptide. Position 30 is a pyrrolidone carboxylic acid (Q30). 5 residues coordinate dUMP: R36, H41, K69, N72, and T73. H41 acts as the Proton acceptor in catalysis. 4 disulfide bridges follow: C54–C110, C68–C121, C86–C136, and C93–C100. The active-site Proton donor is the H145. F146 contacts dUMP.

This sequence belongs to the pancreatic ribonuclease family. In terms of tissue distribution, expressed in the cortical tubules of the kidney (at protein level). Also expressed in the medullary tubules of the kidney.

The protein resides in the secreted. In terms of biological role, cleaves preferentially after uridine bases. Has antimicrobial activity against uropathogenic E.coli (UPEC). Probably contributes to urinary tract sterility. This is Ribonuclease 4 (Rnase4) from Mus musculus (Mouse).